The following is a 246-amino-acid chain: tRNA pseudouridine synthase A (246 aa).

D52 acts as the Nucleophile in catalysis. A substrate-binding site is contributed by Y110.

This sequence belongs to the tRNA pseudouridine synthase TruA family. As to quaternary structure, homodimer.

The catalysed reaction is uridine(38/39/40) in tRNA = pseudouridine(38/39/40) in tRNA. In terms of biological role, formation of pseudouridine at positions 38, 39 and 40 in the anticodon stem and loop of transfer RNAs. This is tRNA pseudouridine synthase A from Exiguobacterium sp. (strain ATCC BAA-1283 / AT1b).